A 124-amino-acid chain; its full sequence is Large ribosomal subunit protein bL12 (124 aa).

This sequence belongs to the bacterial ribosomal protein bL12 family. Homodimer. Part of the ribosomal stalk of the 50S ribosomal subunit. Forms a multimeric L10(L12)X complex, where L10 forms an elongated spine to which 2 to 4 L12 dimers bind in a sequential fashion. Binds GTP-bound translation factors.

Functionally, forms part of the ribosomal stalk which helps the ribosome interact with GTP-bound translation factors. Is thus essential for accurate translation. This Bacteroides fragilis (strain ATCC 25285 / DSM 2151 / CCUG 4856 / JCM 11019 / LMG 10263 / NCTC 9343 / Onslow / VPI 2553 / EN-2) protein is Large ribosomal subunit protein bL12.